The primary structure comprises 278 residues: HTH-type transcriptional activator RhaS (278 aa).

In terms of domain architecture, HTH araC/xylS-type spans 174–272; sequence NQLMAWLEDH…NWSPRDIRQG (99 aa). 2 DNA-binding regions (H-T-H motif) span residues 191–212 and 239–262; these read EAVA…KQHT and VTEI…RREF.

In terms of assembly, binds DNA as a dimer.

The protein resides in the cytoplasm. In terms of biological role, activates expression of the rhaBAD and rhaT operons. This Salmonella dublin (strain CT_02021853) protein is HTH-type transcriptional activator RhaS.